Here is a 953-residue protein sequence, read N- to C-terminus: UPF0746 protein DDB_G0281301 (953 aa).

Over residues 1 to 10 the composition is skewed to basic and acidic residues; it reads MVNNKRKEIE. Positions 1–23 are disordered; sequence MVNNKRKEIENQENDNNDDNDGL. Residues 11-21 are compositionally biased toward acidic residues; that stretch reads NQENDNNDDND. Residues 35 to 69 enclose the SAP domain; it reads YDSIRSKELQTIAKSLGLPIIGKKQEIYKRIEGYF.

It belongs to the UPF0746 family.

This chain is UPF0746 protein DDB_G0281301, found in Dictyostelium discoideum (Social amoeba).